A 189-amino-acid chain; its full sequence is MQAFKKLTSSAIPLWLSDIDTDMIIPANFLTQTTKDGYGKSLFHNLKEKDSSFVFNNPDYSNSEILIAGDNFGCGSSREHAVWALTQAGIKVIIAPSFSDIFFNNAAKNGLLLISLDKDTVKELCDKAEDPKFSMTIDLQEQTVSADGSIYSFDYDPFRKDCLIRGLDDMTYLIEHLDIIKQFEQSQRG.

It belongs to the LeuD family. LeuD type 1 subfamily. As to quaternary structure, heterodimer of LeuC and LeuD.

The catalysed reaction is (2R,3S)-3-isopropylmalate = (2S)-2-isopropylmalate. Its pathway is amino-acid biosynthesis; L-leucine biosynthesis; L-leucine from 3-methyl-2-oxobutanoate: step 2/4. Catalyzes the isomerization between 2-isopropylmalate and 3-isopropylmalate, via the formation of 2-isopropylmaleate. This Francisella tularensis subsp. holarctica (strain FTNF002-00 / FTA) protein is 3-isopropylmalate dehydratase small subunit.